The primary structure comprises 752 residues: Probable cell surface ferric reductase kap2 (752 aa).

Residues 40–60 traverse the membrane as a helical segment; the sequence is GKYGLGWVYFSVILLAISTII. 2 N-linked (GlcNAc...) asparagine glycosylation sites follow: N118 and N133. The next 2 helical transmembrane spans lie at 157–177 and 195–215; these read IGFPSLGASSIILAALIFVTL and PPLAIRAGMIAVAMIPWIIAL. One can recognise a Ferric oxidoreductase domain in the interval 201–348; that stretch reads AGMIAVAMIP…WATVAIWMLS (148 aa). Residues H237 and H251 each coordinate heme. A run of 3 helical transmembrane segments spans residues 241-261, 281-301, and 306-326; these read GYLCLFLSLIHMVPFYVTPIW, GTGWAALVPLIVLCLHSLPIL, and YELFKLVHLPLSIIFLAMIFW. Heme contacts are provided by H313 and H327. Residues 331 to 351 traverse the membrane as a helical segment; the sequence is FLASWDYLWATVAIWMLSYAV. The 127-residue stretch at 349–475 folds into the FAD-binding FR-type domain; it reads YAVRLFYVNW…EGPYGGMKRD (127 aa). An N-linked (GlcNAc...) asparagine glycan is attached at N357. 467–470 serves as a coordination point for NADP(+); that stretch reads GPYG. A helical transmembrane segment spans residues 482–502; sequence VVFFAGGSGITATASHLLNLI. A glycan (N-linked (GlcNAc...) asparagine) is linked at N627. Residue 714 to 715 coordinates NADP(+); sequence CG.

This sequence belongs to the ferric reductase (FRE) family. FAD serves as cofactor. It depends on heme as a cofactor.

The protein resides in the cell membrane. The catalysed reaction is 2 a Fe(II)-siderophore + NADP(+) + H(+) = 2 a Fe(III)-siderophore + NADPH. Functionally, probable cell surface ferric reductase that acts as a negative regulatory factor of growth and development. Involved in kojic acid production through the regulation of kojA expression. This Aspergillus oryzae (strain ATCC 42149 / RIB 40) (Yellow koji mold) protein is Probable cell surface ferric reductase kap2.